The sequence spans 868 residues: Leucine--tRNA ligase (868 aa).

Positions 42 to 52 (PYPSGKLHMGH) match the 'HIGH' region motif. Residues 627-631 (KMSKS) carry the 'KMSKS' region motif. Position 630 (Lys630) interacts with ATP.

This sequence belongs to the class-I aminoacyl-tRNA synthetase family.

It localises to the cytoplasm. The enzyme catalyses tRNA(Leu) + L-leucine + ATP = L-leucyl-tRNA(Leu) + AMP + diphosphate. The polypeptide is Leucine--tRNA ligase (Pseudomonas putida (strain W619)).